The primary structure comprises 237 residues: Sugar fermentation stimulation protein homolog (237 aa).

Belongs to the SfsA family.

The polypeptide is Sugar fermentation stimulation protein homolog (Pseudomonas putida (strain ATCC 700007 / DSM 6899 / JCM 31910 / BCRC 17059 / LMG 24140 / F1)).